Reading from the N-terminus, the 79-residue chain is MKNLEIILQSSKMIGSGLATSGLIGAGAGVGIVFGCLILAFSRNPNLQKELFSYALIGFALTEAIGLLALVMAFLILFI.

Helical transmembrane passes span 21–41 (SGLI…ILAF) and 59–79 (FALT…ILFI).

This sequence belongs to the ATPase C chain family. As to quaternary structure, F-type ATPases have 2 components, CF(1) - the catalytic core - and CF(0) - the membrane proton channel. CF(1) has five subunits: alpha(3), beta(3), gamma(1), delta(1), epsilon(1). CF(0) has three main subunits: a, b and c.

It is found in the mitochondrion membrane. Its function is as follows. Mitochondrial membrane ATP synthase (F(1)F(0) ATP synthase or Complex V) produces ATP from ADP in the presence of a proton gradient across the membrane which is generated by electron transport complexes of the respiratory chain. F-type ATPases consist of two structural domains, F(1) - containing the extramembraneous catalytic core and F(0) - containing the membrane proton channel, linked together by a central stalk and a peripheral stalk. During catalysis, ATP synthesis in the catalytic domain of F(1) is coupled via a rotary mechanism of the central stalk subunits to proton translocation. Part of the complex F(0) domain. A homomeric c-ring of probably 10 subunits is part of the complex rotary element. This is ATP synthase subunit 9, mitochondrial (ATP9) from Acanthamoeba castellanii (Amoeba).